Here is a 406-residue protein sequence, read N- to C-terminus: MALWIYVVPPLAGLVIGYFTNDIAIKMLFRPYRAYRIFGWRIPFTPGLIPQNQPRLAKQIAKTIMGSLLTPEELHNLARKLLRTERMQAGIRWLLGVALDRLQNPEQQQQTAQVLARILADLFNESLPRLVKVLARQETFLEGPINQLFDQVLLELRLNAEQARQLSEWILKQALPPKVLRQNLVDFLTDRNIEALDEEFRERATGSYWLVANLFGLKNALLRLRTYCLEEPEGAEAILEDLLKDINAPRRLTEILQNLSLQNLPVSAVRQLRRALRDGIQDYLRSQGPEVIKGLGESIDWEKVASLVLGRLRNSKALIASIDQISADLALILERYLERDLESLMMQVIPVLNLDQVIADKVNATSPAELEQAIQQIVRQELQAIVNLGGLLGFLVGCVQVLFLLR.

Helical transmembrane passes span 1–21 (MALW…YFTN) and 385–405 (IVNL…LFLL).

This sequence belongs to the UPF0754 family.

It localises to the cell inner membrane. This Synechococcus sp. (strain JA-3-3Ab) (Cyanobacteria bacterium Yellowstone A-Prime) protein is UPF0754 membrane protein CYA_0973.